A 320-amino-acid polypeptide reads, in one-letter code: Aspartate carbamoyltransferase catalytic subunit (320 aa).

Carbamoyl phosphate is bound by residues Arg-58 and Thr-59. Residue Lys-86 participates in L-aspartate binding. Carbamoyl phosphate contacts are provided by Arg-108, His-136, and Gln-139. L-aspartate contacts are provided by Arg-169 and Arg-223. Residues Gly-264 and Pro-265 each contribute to the carbamoyl phosphate site.

Belongs to the aspartate/ornithine carbamoyltransferase superfamily. ATCase family. As to quaternary structure, heterododecamer (2C3:3R2) of six catalytic PyrB chains organized as two trimers (C3), and six regulatory PyrI chains organized as three dimers (R2).

It carries out the reaction carbamoyl phosphate + L-aspartate = N-carbamoyl-L-aspartate + phosphate + H(+). It functions in the pathway pyrimidine metabolism; UMP biosynthesis via de novo pathway; (S)-dihydroorotate from bicarbonate: step 2/3. Functionally, catalyzes the condensation of carbamoyl phosphate and aspartate to form carbamoyl aspartate and inorganic phosphate, the committed step in the de novo pyrimidine nucleotide biosynthesis pathway. The sequence is that of Aspartate carbamoyltransferase catalytic subunit from Cereibacter sphaeroides (strain ATCC 17025 / ATH 2.4.3) (Rhodobacter sphaeroides).